The following is a 219-amino-acid chain: Proteasome subunit beta (219 aa).

The propeptide at 1 to 14 is removed in mature form; by autocatalysis; that stretch reads MISNSEYHKEYMKG. Catalysis depends on T15, which acts as the Nucleophile.

This sequence belongs to the peptidase T1B family. As to quaternary structure, the 20S proteasome core is composed of 14 alpha and 14 beta subunits that assemble into four stacked heptameric rings, resulting in a barrel-shaped structure. The two inner rings, each composed of seven catalytic beta subunits, are sandwiched by two outer rings, each composed of seven alpha subunits. The catalytic chamber with the active sites is on the inside of the barrel. Has a gated structure, the ends of the cylinder being occluded by the N-termini of the alpha-subunits. Is capped at one or both ends by the proteasome regulatory ATPase, PAN.

Its subcellular location is the cytoplasm. The enzyme catalyses Cleavage of peptide bonds with very broad specificity.. With respect to regulation, the formation of the proteasomal ATPase PAN-20S proteasome complex, via the docking of the C-termini of PAN into the intersubunit pockets in the alpha-rings, triggers opening of the gate for substrate entry. Interconversion between the open-gate and close-gate conformations leads to a dynamic regulation of the 20S proteasome proteolysis activity. Functionally, component of the proteasome core, a large protease complex with broad specificity involved in protein degradation. This Methanococcus maripaludis (strain C5 / ATCC BAA-1333) protein is Proteasome subunit beta.